A 334-amino-acid polypeptide reads, in one-letter code: Putative heat shock protein HSP 90-alpha A5 (334 aa).

Residues 55-107 (KRNKQVSDAEAEKKEDKRKKKKESNDKPEIEDVGSDEEEEKKDADKKKKKSKE) are disordered. Over residues 59-69 (QVSDAEAEKKE) the composition is skewed to basic and acidic residues. Residues 85 to 94 (EDVGSDEEEE) show a composition bias toward acidic residues. Ser-89 carries the phosphoserine modification. Residues 234 to 267 (LELPEDEEEKKKQEEKKTKFENLCKIMKDMLEKK) adopt a coiled-coil conformation. The interval 314–334 (EMPPLRGGDDTSRMEEVGGSG) is disordered. Residues 320–334 (GGDDTSRMEEVGGSG) show a composition bias toward basic and acidic residues. The TPR repeat-binding signature appears at 327–331 (MEEVG).

Belongs to the heat shock protein 90 family. In terms of assembly, homodimer.

It localises to the cytoplasm. In terms of biological role, putative molecular chaperone that may promote the maturation, structural maintenance and proper regulation of specific target proteins. The sequence is that of Putative heat shock protein HSP 90-alpha A5 (HSP90AA5P) from Homo sapiens (Human).